Reading from the N-terminus, the 570-residue chain is Capsid vertex component 2 (570 aa).

The tract at residues methionine 1 to tryptophan 54 is interaction with major capsid protein/MCP. Residues glutamine 102–glutamine 123 form a disordered region.

The protein belongs to the herpesviridae CVC2 protein family. As to quaternary structure, heterodimerizes with CVC1. Interacts with major capsid protein/MCP and triplex capsid protein 1/TRX1 at the pentamer vertices. Interacts with the large tegument protein/LTP.

The protein localises to the virion. It is found in the host nucleus. In terms of biological role, capsid vertex-specific component that plays a role during viral DNA encapsidation, assuring correct genome cleavage and presumably stabilizing capsids that contain full-length viral genomes. Participates in the interaction between the capsid and the tegument through interaction with the large tegument protein/LTP. The chain is Capsid vertex component 2 from Homo sapiens (Human).